A 315-amino-acid polypeptide reads, in one-letter code: DNA-directed RNA polymerase subunit alpha (315 aa).

Positions 1–228 (MIEMEKPKVE…EHLNLFITLK (228 aa)) are alpha N-terminal domain (alpha-NTD). An alpha C-terminal domain (alpha-CTD) region spans residues 245–315 (KEKVLEMTIE…LGLGLRPSDE (71 aa)).

It belongs to the RNA polymerase alpha chain family. In terms of assembly, homodimer. The RNAP catalytic core consists of 2 alpha, 1 beta, 1 beta' and 1 omega subunit. When a sigma factor is associated with the core the holoenzyme is formed, which can initiate transcription.

It carries out the reaction RNA(n) + a ribonucleoside 5'-triphosphate = RNA(n+1) + diphosphate. Functionally, DNA-dependent RNA polymerase catalyzes the transcription of DNA into RNA using the four ribonucleoside triphosphates as substrates. The sequence is that of DNA-directed RNA polymerase subunit alpha from Alkaliphilus metalliredigens (strain QYMF).